Consider the following 310-residue polypeptide: Ribosomal RNA small subunit methyltransferase H (310 aa).

Residues 47–49 (GGH), Asp66, Phe93, Asp108, and Gln115 contribute to the S-adenosyl-L-methionine site. The disordered stretch occupies residues 275–310 (RKPFMASEQEQADNPRSRSAKLRIARRRPDTARSGP). Residues 301–310 (RRPDTARSGP) are compositionally biased toward basic and acidic residues.

The protein belongs to the methyltransferase superfamily. RsmH family.

Its subcellular location is the cytoplasm. The enzyme catalyses cytidine(1402) in 16S rRNA + S-adenosyl-L-methionine = N(4)-methylcytidine(1402) in 16S rRNA + S-adenosyl-L-homocysteine + H(+). Its function is as follows. Specifically methylates the N4 position of cytidine in position 1402 (C1402) of 16S rRNA. This Synechococcus sp. (strain CC9311) protein is Ribosomal RNA small subunit methyltransferase H.